The sequence spans 187 residues: UPF0301 protein YqgE (187 aa).

Belongs to the UPF0301 (AlgH) family.

The polypeptide is UPF0301 protein YqgE (Salmonella agona (strain SL483)).